Consider the following 530-residue polypeptide: Dual specificity calcium/calmodulin-dependent 3',5'-cyclic nucleotide phosphodiesterase 1A (530 aa).

Calmodulin-binding regions lie at residues 24–44 and 114–137; these read TEKM…QLEK and EKPR…MYRK. The region spanning 142-508 is the PDEase domain; that stretch reads VGLAYPEAVI…ERWKELAAQG (367 aa). The Proton donor role is filled by His219. Zn(2+) contacts are provided by His223, His259, Asp260, and Asp366. Mg(2+) is bound at residue Asp260. Disordered stretches follow at residues 450–471 and 502–530; these read TKTP…NDGT and KELA…ETHS. Positions 451–471 are enriched in polar residues; the sequence is KTPSYGASRRSNMKGTTNDGT. Residues 510–530 are compositionally biased toward basic and acidic residues; it reads PDPHKNSDLVNAEEKHAETHS.

The protein belongs to the cyclic nucleotide phosphodiesterase family. PDE1 subfamily. Homodimer. Interacts with YWHAZ. It depends on Zn(2+) as a cofactor. Requires Mg(2+) as cofactor.

It catalyses the reaction a nucleoside 3',5'-cyclic phosphate + H2O = a nucleoside 5'-phosphate + H(+). The enzyme catalyses 3',5'-cyclic GMP + H2O = GMP + H(+). It carries out the reaction 3',5'-cyclic AMP + H2O = AMP + H(+). Type I PDE are activated by the binding of calmodulin in the presence of Ca(2+). Its function is as follows. Calcium/calmodulin-dependent cyclic nucleotide phosphodiesterase with a dual specificity for the second messengers cGMP and cAMP, which are key regulators of many important physiological processes. Has a higher efficiency with cGMP compared to cAMP. The polypeptide is Dual specificity calcium/calmodulin-dependent 3',5'-cyclic nucleotide phosphodiesterase 1A (Bos taurus (Bovine)).